The primary structure comprises 414 residues: Transforming growth factor beta-2 proprotein (414 aa).

The first 19 residues, 1-19, serve as a signal peptide directing secretion; it reads MHYCVLSAFLILHLVTVAL. Residues asparagine 72, asparagine 140, and asparagine 241 are each glycosylated (N-linked (GlcNAc...) asparagine). 4 disulfides stabilise this stretch: cysteine 309-cysteine 318, cysteine 317-cysteine 380, cysteine 346-cysteine 411, and cysteine 350-cysteine 413.

It belongs to the TGF-beta family. Interacts with the serine proteases, HTRA1 and HTRA3. Interacts with ASPN. Interacts with MFAP5. As to quaternary structure, interacts with Transforming growth factor beta-2 (TGF-beta-2) chain; interaction is non-covalent and maintains (TGF-beta-2) in a latent state. Interacts with LRRC32/GARP; leading to regulate activation of TGF-beta-2. Interacts with NREP; the interaction results in a decrease in TGFB2 autoinduction. In terms of assembly, transforming growth factor beta-2: Homodimer; disulfide-linked. Transforming growth factor beta-2: Interacts with TGF-beta receptors (TGFBR1 and TGFBR2), leading to signal transduction. Post-translationally, the precursor proprotein is cleaved in the Golgi apparatus to form Transforming growth factor beta-2 (TGF-beta-2) and Latency-associated peptide (LAP) chains, which remain non-covalently linked, rendering TGF-beta-2 inactive.

The protein resides in the secreted. It is found in the extracellular space. The protein localises to the extracellular matrix. In terms of biological role, precursor of the Latency-associated peptide (LAP) and Transforming growth factor beta-2 (TGF-beta-2) chains, which constitute the regulatory and active subunit of TGF-beta-2, respectively. Functionally, required to maintain the Transforming growth factor beta-2 (TGF-beta-2) chain in a latent state during storage in extracellular matrix. Associates non-covalently with TGF-beta-2 and regulates its activation via interaction with 'milieu molecules', such as LTBP1 and LRRC32/GARP, that control activation of TGF-beta-2. Multifunctional protein that regulates various processes such as angiogenesis and heart development. Activation into mature form follows different steps: following cleavage of the proprotein in the Golgi apparatus, Latency-associated peptide (LAP) and Transforming growth factor beta-2 (TGF-beta-2) chains remain non-covalently linked rendering TGF-beta-2 inactive during storage in extracellular matrix. At the same time, LAP chain interacts with 'milieu molecules', such as LTBP1 and LRRC32/GARP, that control activation of TGF-beta-2 and maintain it in a latent state during storage in extracellular milieus. Once activated following release of LAP, TGF-beta-2 acts by binding to TGF-beta receptors (TGFBR1 and TGFBR2), which transduce signal. The polypeptide is Transforming growth factor beta-2 proprotein (TGFB2) (Chlorocebus aethiops (Green monkey)).